The primary structure comprises 726 residues: NHL repeat-containing protein 2 (726 aa).

The 158-residue stretch at 43–200 (QKVDGWEQDL…TSIALKYYKD (158 aa)) folds into the Thioredoxin domain. NHL repeat units lie at residues 212 to 254 (KLYK…VWKN), 265 to 307 (NPGR…IDLE), 335 to 369 (ISSPWDVVFGTSGSEVQRGDILWIAMAGTHQIWAL), 409 to 439 (FAQPSGLSLASEDPWSCLFVADSESSTVRTV), 461 to 505 (AFGD…VDPK), and 518 to 562 (TNNV…MDLE).

As to quaternary structure, monomer. As to expression, ubiquitous. Detected in heart, kidney, muscle, brain, lung, liver and in skin fibroblasts (at protein level).

It localises to the cytoplasm. It is found in the cytosol. Its function is as follows. Required for normal embryonic development. The polypeptide is NHL repeat-containing protein 2 (NHLRC2) (Homo sapiens (Human)).